We begin with the raw amino-acid sequence, 151 residues long: S-protein homolog 74 (151 aa).

A signal peptide spans 1 to 25 (MNYIKQFILAICFYLVLTCQDHVLA).

Belongs to the plant self-incompatibility (S1) protein family.

The protein resides in the secreted. The sequence is that of S-protein homolog 74 from Arabidopsis thaliana (Mouse-ear cress).